The chain runs to 433 residues: MPVAVIESLDHEGRGVAHVDGKVVFVEGALAGEQVEYTVYRQRPSYDLAEATRIIKASAQRVRPRCEHFGVCGGCSMQHLDSVAQAAAKQRVLEDALWHVGKVRPDIIYAAIHGPSWGYRYRARIGVRVVPKKGGVLIGFHERRSSYIADMRSCPILPPHVSGMLPALHELVGGLSIADRLPQIEIAIGDTAIVLVFRNLLPLTPADEARLAAFAGEHGVQVWLQPGAPATAHPLHPKGAAPLAYTLPEFDVAMAFQPTDFTQVNIDINRLLIRRSLQLLDPRPGERIADLFCGLGNFSLPIARCGATVVGVEGSESLVRRAAKNARRNGLHGRSEFHAANLFEATEDSLAALGRLDKLLIDPPREGAIAVVKALSTLQSPARIVYVSCNPATLARDAAVLVHEKGYVLRGAGIANMFPQTSHVESIALFERN.

One can recognise a TRAM domain in the interval 1–53; sequence MPVAVIESLDHEGRGVAHVDGKVVFVEGALAGEQVEYTVYRQRPSYDLAEATR. [4Fe-4S] cluster-binding residues include cysteine 66, cysteine 72, cysteine 75, and cysteine 154. Positions 263, 292, 297, 313, 341, and 362 each coordinate S-adenosyl-L-methionine. Catalysis depends on cysteine 389, which acts as the Nucleophile.

The protein belongs to the class I-like SAM-binding methyltransferase superfamily. RNA M5U methyltransferase family. RlmD subfamily.

The catalysed reaction is uridine(1939) in 23S rRNA + S-adenosyl-L-methionine = 5-methyluridine(1939) in 23S rRNA + S-adenosyl-L-homocysteine + H(+). Catalyzes the formation of 5-methyl-uridine at position 1939 (m5U1939) in 23S rRNA. This Aromatoleum aromaticum (strain DSM 19018 / LMG 30748 / EbN1) (Azoarcus sp. (strain EbN1)) protein is 23S rRNA (uracil(1939)-C(5))-methyltransferase RlmD.